The chain runs to 444 residues: Tubulin beta-7 chain (444 aa).

GTP contacts are provided by Q11, E69, S138, G142, T143, G144, N204, and N226. Residue E69 coordinates Mg(2+).

It belongs to the tubulin family. Dimer of alpha and beta chains. A typical microtubule is a hollow water-filled tube with an outer diameter of 25 nm and an inner diameter of 15 nM. Alpha-beta heterodimers associate head-to-tail to form protofilaments running lengthwise along the microtubule wall with the beta-tubulin subunit facing the microtubule plus end conferring a structural polarity. Microtubules usually have 13 protofilaments but different protofilament numbers can be found in some organisms and specialized cells. Mg(2+) is required as a cofactor.

It localises to the cytoplasm. The protein resides in the cytoskeleton. In terms of biological role, tubulin is the major constituent of microtubules, a cylinder consisting of laterally associated linear protofilaments composed of alpha- and beta-tubulin heterodimers. Microtubules grow by the addition of GTP-tubulin dimers to the microtubule end, where a stabilizing cap forms. Below the cap, tubulin dimers are in GDP-bound state, owing to GTPase activity of alpha-tubulin. This Gossypium hirsutum (Upland cotton) protein is Tubulin beta-7 chain.